Reading from the N-terminus, the 116-residue chain is Large ribosomal subunit protein bL19 (116 aa).

This sequence belongs to the bacterial ribosomal protein bL19 family.

In terms of biological role, this protein is located at the 30S-50S ribosomal subunit interface and may play a role in the structure and function of the aminoacyl-tRNA binding site. In Clostridium novyi (strain NT), this protein is Large ribosomal subunit protein bL19.